The following is a 358-amino-acid chain: uncharacterized protein (358 aa).

Position 207–214 (207–214 (AAVKDGKT)) interacts with ATP.

This is an uncharacterized protein from Bacillus subtilis (strain 168).